The sequence spans 299 residues: GTPase Era (299 aa).

The Era-type G domain occupies 9–177 (RSGSVAVIGR…VGDLLKLVPE (169 aa)). Residues 17–24 (GRPNVGKS) are G1. 17-24 (GRPNVGKS) lines the GTP pocket. Residues 43 to 47 (QTTRH) are G2. The interval 64-67 (DTPG) is G3. Residues 64–68 (DTPGL) and 126–129 (NKVD) each bind GTP. The segment at 126–129 (NKVD) is G4. The G5 stretch occupies residues 156-158 (VSA). The 85-residue stretch at 200–284 (VREQLMRQLG…FLETWVRVRE (85 aa)) folds into the KH type-2 domain.

This sequence belongs to the TRAFAC class TrmE-Era-EngA-EngB-Septin-like GTPase superfamily. Era GTPase family. As to quaternary structure, monomer.

It is found in the cytoplasm. Its subcellular location is the cell inner membrane. Functionally, an essential GTPase that binds both GDP and GTP, with rapid nucleotide exchange. Plays a role in 16S rRNA processing and 30S ribosomal subunit biogenesis and possibly also in cell cycle regulation and energy metabolism. The polypeptide is GTPase Era (Xanthomonas oryzae pv. oryzae (strain MAFF 311018)).